A 296-amino-acid polypeptide reads, in one-letter code: Thioredoxin-related transmembrane protein 2 (296 aa).

Positions 1 to 48 (MAVLAPLIALVYSVPRLSRWLAQPYYLLSALLSAAFLLVRKLPPLCHG) are cleaved as a signal peptide. At 49–102 (LPTQREDGNPCDFDWREVEILMFLSAIVMMKNRRSITVEQHIGNIFMFSKVANA) the chain is on the extracellular side. A helical membrane pass occupies residues 103–125 (ILFFRLDIRMGLLYITLCIVFLM). The region spanning 114-269 (LLYITLCIVF…LYQRAKKLSK (156 aa)) is the Thioredoxin domain. Over 126 to 296 (TCKPPLYMGP…VSDGESKKDK (171 aa)) the chain is Cytoplasmic. Serine 211, serine 243, and serine 288 each carry phosphoserine. The disordered stretch occupies residues 269-296 (KAGDNIPEEQPVAPTPTRVSDGESKKDK). A Di-lysine motif motif is present at residues 293–296 (KKDK).

As to quaternary structure, monomer. Homodimer; disulfide-linked. Occurs in both reduced and oxidized monomeric form. Oxidative conditions increase homodimerization. Interacts with CANX. Interacts with ATP2A2.

The protein localises to the endoplasmic reticulum membrane. It is found in the mitochondrion membrane. Endoplasmic reticulum and mitochondria-associated protein that probably functions as a regulator of cellular redox state and thereby regulates protein post-translational modification, protein folding and mitochondrial activity. Indirectly regulates neuronal proliferation, migration, and organization in the developing brain. The chain is Thioredoxin-related transmembrane protein 2 (TMX2) from Macaca fascicularis (Crab-eating macaque).